The sequence spans 420 residues: 3-oxoacyl-[acyl-carrier-protein] synthase 2 (420 aa).

One can recognise a Ketosynthase family 3 (KS3) domain in the interval 13-419 (FPNVVVTGIA…GHNVAIAFGC (407 aa)). Residues C173, H314, and H349 each act as for beta-ketoacyl synthase activity in the active site.

Belongs to the thiolase-like superfamily. Beta-ketoacyl-ACP synthases family.

It localises to the cytoplasm. It carries out the reaction an ultra-long-chain di-unsaturated fatty acyl-[ACP] + malonyl-[ACP] + H(+) = a 3-oxo-ultra-long-chain di-unsaturated fatty acyl-[ACP] + holo-[ACP] + CO2. Its pathway is lipid metabolism; mycolic acid biosynthesis. Functionally, part of the mycobacterial fatty acid elongation system FAS-II, which is involved in mycolic acid biosynthesis. Catalyzes the elongation of long chain acyl-ACP substrates by the addition of two carbons from malonyl-ACP to an acyl acceptor. Involved in extension of the mycolate chains to full lengths and produces longer chain multiunsaturated hydrocarbons averaging 54 carbons in length. This is 3-oxoacyl-[acyl-carrier-protein] synthase 2 (kasB) from Mycobacterium leprae (strain TN).